The following is a 325-amino-acid chain: Biotin synthase (325 aa).

Residues 49-267 (TQVQISTLLS…IAAARISMPR (219 aa)) enclose the Radical SAM core domain. Positions 64, 68, and 71 each coordinate [4Fe-4S] cluster. The [2Fe-2S] cluster site is built by C108, C139, C199, and R271.

It belongs to the radical SAM superfamily. Biotin synthase family. In terms of assembly, homodimer. [4Fe-4S] cluster serves as cofactor. It depends on [2Fe-2S] cluster as a cofactor.

It catalyses the reaction (4R,5S)-dethiobiotin + (sulfur carrier)-SH + 2 reduced [2Fe-2S]-[ferredoxin] + 2 S-adenosyl-L-methionine = (sulfur carrier)-H + biotin + 2 5'-deoxyadenosine + 2 L-methionine + 2 oxidized [2Fe-2S]-[ferredoxin]. It participates in cofactor biosynthesis; biotin biosynthesis; biotin from 7,8-diaminononanoate: step 2/2. In terms of biological role, catalyzes the conversion of dethiobiotin (DTB) to biotin by the insertion of a sulfur atom into dethiobiotin via a radical-based mechanism. The sequence is that of Biotin synthase from Acidiphilium cryptum (strain JF-5).